The chain runs to 71 residues: Putative antitoxin VapB15 (71 aa).

This sequence belongs to the UPF0330 family.

Its function is as follows. Possibly the antitoxin component of a type II toxin-antitoxin (TA) system. Its cognate toxin is VapC15 (Potential). This is Putative antitoxin VapB15 (vapB15) from Archaeoglobus fulgidus (strain ATCC 49558 / DSM 4304 / JCM 9628 / NBRC 100126 / VC-16).